The following is a 142-amino-acid chain: Putative transcriptional regulatory protein PF0535 (142 aa).

This sequence belongs to the Tfx family.

Its function is as follows. Putative transcriptional regulator. The protein is Putative transcriptional regulatory protein PF0535 of Pyrococcus furiosus (strain ATCC 43587 / DSM 3638 / JCM 8422 / Vc1).